A 94-amino-acid chain; its full sequence is Integration host factor subunit beta (94 aa).

It belongs to the bacterial histone-like protein family. As to quaternary structure, heterodimer of an alpha and a beta chain.

In terms of biological role, this protein is one of the two subunits of integration host factor, a specific DNA-binding protein that functions in genetic recombination as well as in transcriptional and translational control. In Caulobacter sp. (strain K31), this protein is Integration host factor subunit beta.